A 579-amino-acid polypeptide reads, in one-letter code: Eukaryotic translation initiation factor 3 subunit D (579 aa).

3 disordered regions span residues 1–20 (MASFKLPELQPDNDLWGPAS), 51–72 (NASGASNDAANARGGRQGRARD), and 109–170 (RRGG…FGWK). A compositionally biased stretch (low complexity) spans 51-64 (NASGASNDAANARG). Residues 120 to 167 (GGRGGRGGAGGAGAAGGRGASKFGAGAGRGARGGRGGAAGARRGGGRF) show a composition bias toward gly residues. Residues 307 to 321 (AFDYLTVNENAADPP) form an RNA gate region.

This sequence belongs to the eIF-3 subunit D family. Component of the eukaryotic translation initiation factor 3 (eIF-3) complex.

It localises to the cytoplasm. Functionally, mRNA cap-binding component of the eukaryotic translation initiation factor 3 (eIF-3) complex, which is involved in protein synthesis of a specialized repertoire of mRNAs and, together with other initiation factors, stimulates binding of mRNA and methionyl-tRNAi to the 40S ribosome. The eIF-3 complex specifically targets and initiates translation of a subset of mRNAs involved in cell proliferation. In the eIF-3 complex, eif3d specifically recognizes and binds the 7-methylguanosine cap of a subset of mRNAs. This is Eukaryotic translation initiation factor 3 subunit D from Mycosarcoma maydis (Corn smut fungus).